The following is a 341-amino-acid chain: GTPase Obg (341 aa).

The region spanning 1–159 is the Obg domain; the sequence is MKFVDEALIK…RNLRLELRVL (159 aa). The tract at residues 128 to 150 is disordered; that stretch reads TRYKSSVNRSPRQTTPGSPGESR. Over residues 129–144 the composition is skewed to polar residues; it reads RYKSSVNRSPRQTTPG. Residues 160-334 form the OBG-type G domain; sequence ADVGLLGLPN…LCYALMQLID (175 aa). GTP contacts are provided by residues 166-173, 191-195, 213-216, 283-286, and 315-317; these read GLPNAGKS, FTTLH, DIPG, NKID, and SAI. Mg(2+)-binding residues include Ser-173 and Thr-193.

This sequence belongs to the TRAFAC class OBG-HflX-like GTPase superfamily. OBG GTPase family. Monomer. Mg(2+) is required as a cofactor.

The protein localises to the cytoplasm. Its function is as follows. An essential GTPase which binds GTP, GDP and possibly (p)ppGpp with moderate affinity, with high nucleotide exchange rates and a fairly low GTP hydrolysis rate. Plays a role in control of the cell cycle, stress response, ribosome biogenesis and in those bacteria that undergo differentiation, in morphogenesis control. This chain is GTPase Obg, found in Legionella pneumophila (strain Paris).